The primary structure comprises 854 residues: Selenocysteine insertion sequence-binding protein 2 (854 aa).

Disordered regions lie at residues 332–351, 356–394, 417–445, and 488–619; these read ADPK…DPSY, HIIH…KYEV, ERRD…KKSQ, and ECAS…PNHT. Polar residues-rich tracts occupy residues 338–350 and 361–372; these read SIPS…SDPS and TQKSKASQGSDL. A Nuclear localization signal motif is present at residues 380–387; it reads KNKKKKEK. Residues 426 to 445 show a composition bias toward polar residues; the sequence is KFQSKQQPQDNFKNNVKKSQ. The segment covering 536 to 547 has biased composition (basic and acidic residues); the sequence is ILKERQERKQRL. Polar residues predominate over residues 548–559; it reads QENAVSPAFTSD. The span at 560 to 572 shows a compositional bias: acidic residues; sequence DTQDGESGGDDQF. A compositionally biased stretch (basic and acidic residues) spans 593–611; the sequence is VEDKSEEPPGTELQRDTEA. The interval 673–694 is RNA-binding; it reads LVLGLREVLKHLKLKKLKCVII. A disordered region spans residues 787-812; the sequence is EPRPQAPPSLPTQGPSCPAEDGPPAL.

As to expression, expressed at high levels in testis.

It is found in the nucleus. Its subcellular location is the mitochondrion. In terms of biological role, mRNA-binding protein that binds to the SECIS (selenocysteine insertion sequence) element present in the 3'-UTR of mRNAs encoding selenoproteins and facilitates the incorporation of the rare amino acid selenocysteine. Insertion of selenocysteine at UGA codons is mediated by SECISBP2 and EEFSEC: SECISBP2 (1) specifically binds the SECIS sequence once the 80S ribosome encounters an in-frame UGA codon and (2) contacts the RPS27A/eS31 of the 40S ribosome before ribosome stalling. (3) GTP-bound EEFSEC then delivers selenocysteinyl-tRNA(Sec) to the 80S ribosome and adopts a preaccommodated state conformation. (4) After GTP hydrolysis, EEFSEC dissociates from the assembly, selenocysteinyl-tRNA(Sec) accommodates, and peptide bond synthesis and selenoprotein elongation occur. The chain is Selenocysteine insertion sequence-binding protein 2 from Homo sapiens (Human).